Reading from the N-terminus, the 401-residue chain is Transcription factor atf-2 (401 aa).

The span at 19-38 (SASAEFSSSSSDSSNFSEGS) shows a compositional bias: low complexity. The segment at 19–78 (SASAEFSSSSSDSSNFSEGSPPESRRNSVNESVIKDEHYWERRRRNNDASRRSREKRRQN) is disordered. Residues 41–78 (ESRRNSVNESVIKDEHYWERRRRNNDASRRSREKRRQN) are compositionally biased toward basic and acidic residues. The 47-residue stretch at 54–100 (DEHYWERRRRNNDASRRSREKRRQNDLAMEEKIMLLSAENERLKSQL) folds into the bZIP 1 domain. The tract at residues 60–85 (RRRRNNDASRRSREKRRQNDLAMEEK) is basic motif 1. The interval 89-96 (LSAENERL) is leucine-zipper 1. Residues 181 to 211 (SASSLFSSSSSSAFHPFRPSESAQQSFPSSS) are compositionally biased toward low complexity. 2 disordered regions span residues 181 to 256 (SASS…PQPV) and 273 to 345 (QRRP…AAKR). 2 stretches are compositionally biased toward polar residues: residues 222-256 (DSST…PQPV) and 273-283 (QRRPSPTVPQS). The span at 305-317 (ESVSSSASFSPSH) shows a compositional bias: low complexity. The bZIP 2 domain maps to 329 to 392 (SPQYVDRRRR…AHFKSVLAQR (64 aa)). Positions 335–360 (RRRRNNEAAKRCRANRRAVFEYRSRR) are basic motif 2. A coiled-coil region spans residues 361-388 (VQLLEGENEDLRTQIETLKAEIAHFKSV). The interval 364 to 378 (LEGENEDLRTQIETL) is leucine-zipper 2.

It belongs to the bZIP family. As to quaternary structure, interacts with cell death specification protein ces-2. In terms of processing, phosphorylated by mitogen-activated protein kinases pmk-2 and pmk-3. May be responsive to osmotic stress.

It is found in the nucleus. In terms of biological role, acts as a transcription factor that recognizes and binds to the sequence 5'-[GA]TTA[CT]GTAA[CT]-3', a sequence present in many promoters. Involved in the development of the excretory duct cell, by positively modulating embryonic transcription of putative transcription factor lin-48, acting in concert with cell death specification protein ces-2. Negatively modulates expression of key autophagy-related genes, bec-1/ATG6 and lgg-1/ATG8, and may link together autophagy and apoptosis during development. Positively modulates expression of neuropeptide pigment dispersing factor homologs pdf-1 and pdf-2. This is Transcription factor atf-2 from Caenorhabditis elegans.